The following is a 421-amino-acid chain: Acetate kinase (421 aa).

A Mg(2+)-binding site is contributed by Asn-7. Position 14 (Lys-14) interacts with ATP. Arg-91 provides a ligand contact to substrate. Asp-148 serves as the catalytic Proton donor/acceptor. ATP contacts are provided by residues 208 to 212 and 283 to 285; these read HIGNG and DRR. Residue Glu-387 participates in Mg(2+) binding.

It belongs to the acetokinase family. Homodimer. Requires Mg(2+) as cofactor. Mn(2+) is required as a cofactor.

The protein resides in the cytoplasm. It carries out the reaction acetate + ATP = acetyl phosphate + ADP. It functions in the pathway metabolic intermediate biosynthesis; acetyl-CoA biosynthesis; acetyl-CoA from acetate: step 1/2. Its function is as follows. Catalyzes the formation of acetyl phosphate from acetate and ATP. Can also catalyze the reverse reaction. The chain is Acetate kinase from Geobacter sulfurreducens (strain ATCC 51573 / DSM 12127 / PCA).